A 151-amino-acid chain; its full sequence is Sec-independent protein translocase protein TatB (151 aa).

Residues 1–21 (MFGMSLPEIIIIAVIAVIFLG) form a helical membrane-spanning segment. Residues 120 to 131 (NNDPLNNETLNE) are compositionally biased toward low complexity. The segment at 120 to 151 (NNDPLNNETLNEQPSKPSPNLNLENKEIKKEA) is disordered. The span at 132–142 (QPSKPSPNLNL) shows a compositional bias: polar residues.

The protein belongs to the TatB family. In terms of assembly, the Tat system comprises two distinct complexes: a TatABC complex, containing multiple copies of TatA, TatB and TatC subunits, and a separate TatA complex, containing only TatA subunits. Substrates initially bind to the TatABC complex, which probably triggers association of the separate TatA complex to form the active translocon.

It is found in the cell inner membrane. In terms of biological role, part of the twin-arginine translocation (Tat) system that transports large folded proteins containing a characteristic twin-arginine motif in their signal peptide across membranes. Together with TatC, TatB is part of a receptor directly interacting with Tat signal peptides. TatB may form an oligomeric binding site that transiently accommodates folded Tat precursor proteins before their translocation. The sequence is that of Sec-independent protein translocase protein TatB from Campylobacter fetus subsp. fetus (strain 82-40).